A 431-amino-acid polypeptide reads, in one-letter code: Aspartokinase (431 aa).

The protein belongs to the aspartokinase family.

The catalysed reaction is L-aspartate + ATP = 4-phospho-L-aspartate + ADP. Its pathway is amino-acid biosynthesis; L-lysine biosynthesis via DAP pathway; (S)-tetrahydrodipicolinate from L-aspartate: step 1/4. It functions in the pathway amino-acid biosynthesis; L-methionine biosynthesis via de novo pathway; L-homoserine from L-aspartate: step 1/3. The protein operates within amino-acid biosynthesis; L-threonine biosynthesis; L-threonine from L-aspartate: step 1/5. The sequence is that of Aspartokinase (lysC) from Chlamydia trachomatis serovar D (strain ATCC VR-885 / DSM 19411 / UW-3/Cx).